The chain runs to 446 residues: Serine decarboxylase 3 (446 aa).

Residue histidine 162 coordinates substrate. An N6-(pyridoxal phosphate)lysine modification is found at lysine 274.

This sequence belongs to the group II decarboxylase family. It depends on pyridoxal 5'-phosphate as a cofactor.

It catalyses the reaction L-serine + H(+) = ethanolamine + CO2. Catalyzes the biosynthesis of ethanolamine from serine. Decarboxylation of free serine is the major source of ethanolamine production in plants and ethanolamine metabolism is crucial for the synthesis of choline, phosphatidylethanolamine (PE) and phosphatidylcholine (PC), and thus for plant growth. The sequence is that of Serine decarboxylase 3 from Oryza sativa subsp. japonica (Rice).